The chain runs to 247 residues: Protein GrpE (247 aa).

Disordered regions lie at residues 1-68 (MKKN…KNDD) and 226-247 (PAEKQDEKKAEESEAADKKNEN). 3 stretches are compositionally biased toward basic and acidic residues: residues 7–35 (KHADKKEAAKEELEKDLQPKDESAVKDEQ), 43–54 (TSKENPQEDKAE), and 228–247 (EKQDEKKAEESEAADKKNEN).

This sequence belongs to the GrpE family. Homodimer.

It localises to the cytoplasm. Functionally, participates actively in the response to hyperosmotic and heat shock by preventing the aggregation of stress-denatured proteins, in association with DnaK and GrpE. It is the nucleotide exchange factor for DnaK and may function as a thermosensor. Unfolded proteins bind initially to DnaJ; upon interaction with the DnaJ-bound protein, DnaK hydrolyzes its bound ATP, resulting in the formation of a stable complex. GrpE releases ADP from DnaK; ATP binding to DnaK triggers the release of the substrate protein, thus completing the reaction cycle. Several rounds of ATP-dependent interactions between DnaJ, DnaK and GrpE are required for fully efficient folding. The protein is Protein GrpE of Treponema denticola (strain ATCC 35405 / DSM 14222 / CIP 103919 / JCM 8153 / KCTC 15104).